The sequence spans 404 residues: Cystinosin homolog (404 aa).

Residues 20-123 (TNNLVVRQKE…FARITVIRSH (104 aa)) lie on the Lumenal side of the membrane. Asn46, Asn53, Asn79, and Asn97 each carry an N-linked (GlcNAc...) asparagine glycan. The chain crosses the membrane as a helical span at residues 124 to 144 (FLAILIQIVGWTYFFAWSISF). The PQ-loop 1 domain maps to 125–191 (LAILIQIVGW…MYYNSHVKNE (67 aa)). Over 145-163 (YPQMYLNFKRKSVVGLNFD) the chain is Cytoplasmic. The helical transmembrane segment at 164-184 (FLSLNLVGFCAYAIFNLLMYY) threads the bilayer. Over 185-207 (NSHVKNEYNIVNPRSPPPVLLND) the chain is Lumenal. The helical transmembrane segment at 208-228 (VVFAVHAFLACFITILQCLFY) threads the bilayer. The Cytoplasmic portion of the chain corresponds to 229-238 (ERDNQSVSSK). Residues 239–259 (CIALMIVLISFGFCSAAATVL) traverse the membrane as a helical segment. Residues 260-263 (RKIQ) are Lumenal-facing. The helical transmembrane segment at 264–285 (LLSFVTSLSYIKMAVTCCKYFP) threads the bilayer. The PQ-loop 2 domain maps to 266–327 (SFVTSLSYIK…MILQAVNVND (62 aa)). The Cytoplasmic segment spans residues 286–295 (QAYFNYTRKS). Residues 296–316 (TVGWSIGNIMLDFTGGTLDIL) form a helical membrane-spanning segment. At 317–337 (QMILQAVNVNDWSAFYANPVK) the chain is on the lumenal side. A helical membrane pass occupies residues 338-358 (FGLGFVSIFFDIIFMVQHYVL). Over 359–404 (YPNAEVPHNEYHGVDNPNPDNIARDAEQYAGDSESMESTEPIIVHD) the chain is Cytoplasmic.

This sequence belongs to the cystinosin family.

The protein resides in the lysosome membrane. The protein localises to the cytoplasmic vesicle. It localises to the phagosome. It catalyses the reaction L-cystine(out) + H(+)(out) = L-cystine(in) + H(+)(in). In terms of biological role, cystine/H(+) symporter that mediates export of cystine, the oxidized dimer of cysteine, from lysosomes. May play a role in the degradation of engulfed apoptotic cells. The sequence is that of Cystinosin homolog (ctns-1) from Caenorhabditis elegans.